The sequence spans 592 residues: uncharacterized protein (592 aa).

This is an uncharacterized protein from Saccharolobus solfataricus (strain ATCC 35092 / DSM 1617 / JCM 11322 / P2) (Sulfolobus solfataricus).